The primary structure comprises 524 residues: MAARCSIAFMIMASCLSVVVSGGLPGDLFALSVASKLRVDRNSTARASSDFGRIVAAAPEAVLHPATPAEIAELVRFSASSPSPFPVAPRGQGHSARGQSLAPGGVVVDMRALASRRGRVNVSAGAAPYVDAGGEQLWADVLRATLEHGLAPRVWTDYLRITVAGTLSNAGIGGQAFRHGPQIANVLELDVITGTGDMVTCSRDKDSDLFFAVLGGLGQFGIITRARIGLMPAPKRVRWVRLAYSDVATFTKDQELLISKRASEAGFDYVEGQVQLNRTLTEGPKSTPFFSSSDIGRLAGLASKSVSGVIYVIEGTMYYNESTSTTMDQKLESILGQLSFEEGFVFTKDVRYVQFLDRVREEERVLRSIGMWDVPHPWLNLFVPRSRILDFDAGVFKGVFAGANPVGVILMYPMNTNMWDDCMMAVASDDDVFYAVGLLRSAAVIGDVERLEKENEAVLAFCHNEDIGCKQYLPYYTSQDGWQRHFGAKWSRVADLKAKYDPHRILSPGQRIFSSPASMVVVSM.

The N-terminal stretch at 1-22 (MAARCSIAFMIMASCLSVVVSG) is a signal peptide. Asparagine 42 carries an N-linked (GlcNAc...) asparagine glycan. Residues 55–233 (VAAAPEAVLH…TRARIGLMPA (179 aa)) form the FAD-binding PCMH-type domain. Positions 91 and 93 each coordinate FAD. A Pros-8alpha-FAD histidine modification is found at histidine 94. 2 residues coordinate FAD: serine 95 and glutamine 99. Residue asparagine 121 is glycosylated (N-linked (GlcNAc...) asparagine). 5 residues coordinate FAD: aspartate 157, threonine 162, serine 168, isoleucine 172, and isoleucine 223. 2 N-linked (GlcNAc...) asparagine glycosylation sites follow: asparagine 277 and asparagine 320. Residues tyrosine 472, serine 507, and glutamine 510 each contribute to the FAD site.

This sequence belongs to the oxygen-dependent FAD-linked oxidoreductase family. In terms of assembly, monomer. It depends on FAD as a cofactor.

The protein resides in the secreted. It is found in the extracellular space. The enzyme catalyses N(6)-dimethylallyladenine + A + H2O = 3-methyl-2-butenal + adenine + AH2. Functionally, catalyzes the oxidation of cytokinins, a family of N(6)-substituted adenine derivatives that are plant hormones, where the substituent is an isopentenyl group. The protein is Cytokinin dehydrogenase 7 (CKX7) of Oryza sativa subsp. japonica (Rice).